The following is a 119-amino-acid chain: Autophagy-related protein 8A (119 aa).

Glycine 117 carries the Phosphatidylethanolamine amidated glycine lipid modification. A propeptide spans 118-119 (removed in mature form); that stretch reads SA.

The protein belongs to the ATG8 family. In terms of assembly, interacts with ATG4. Post-translationally, the C-terminal 2 residues are removed by ATG4 to expose Gly-117 at the C-terminus. The C-terminal Gly is then amidated with phosphatidylethanolamine by an activating system similar to that for ubiquitin. As to expression, constitutively expressed.

The protein localises to the cytoplasmic vesicle. It is found in the autophagosome membrane. It localises to the vacuole membrane. The protein resides in the cytoplasm. Its subcellular location is the cytoskeleton. Functionally, ubiquitin-like modifier involved in cytoplasm to vacuole transport (Cvt) vesicles and autophagosomes formation. May mediate the delivery of the vesicles and autophagosomes to the vacuole via the microtubule cytoskeleton. In terms of biological role, ubiquitin-like modifier involved in autophagosomes formation. May mediate the delivery of the autophagosomes to the vacuole via the microtubule cytoskeleton. The sequence is that of Autophagy-related protein 8A (ATG8A) from Oryza sativa subsp. indica (Rice).